A 226-amino-acid chain; its full sequence is Large ribosomal subunit protein uL1 (226 aa).

This sequence belongs to the universal ribosomal protein uL1 family. In terms of assembly, part of the 50S ribosomal subunit.

Functionally, binds directly to 23S rRNA. The L1 stalk is quite mobile in the ribosome, and is involved in E site tRNA release. In terms of biological role, protein L1 is also a translational repressor protein, it controls the translation of the L11 operon by binding to its mRNA. The polypeptide is Large ribosomal subunit protein uL1 (Borreliella afzelii (strain PKo) (Borrelia afzelii)).